We begin with the raw amino-acid sequence, 254 residues long: Ubiquinone/menaquinone biosynthesis C-methyltransferase UbiE (254 aa).

S-adenosyl-L-methionine-binding positions include T77, D98, 126-127 (NA), and S143.

Belongs to the class I-like SAM-binding methyltransferase superfamily. MenG/UbiE family.

It carries out the reaction a 2-demethylmenaquinol + S-adenosyl-L-methionine = a menaquinol + S-adenosyl-L-homocysteine + H(+). The enzyme catalyses a 2-methoxy-6-(all-trans-polyprenyl)benzene-1,4-diol + S-adenosyl-L-methionine = a 5-methoxy-2-methyl-3-(all-trans-polyprenyl)benzene-1,4-diol + S-adenosyl-L-homocysteine + H(+). The protein operates within quinol/quinone metabolism; menaquinone biosynthesis; menaquinol from 1,4-dihydroxy-2-naphthoate: step 2/2. Its pathway is cofactor biosynthesis; ubiquinone biosynthesis. Methyltransferase required for the conversion of demethylmenaquinol (DMKH2) to menaquinol (MKH2) and the conversion of 2-polyprenyl-6-methoxy-1,4-benzoquinol (DDMQH2) to 2-polyprenyl-3-methyl-6-methoxy-1,4-benzoquinol (DMQH2). In Hydrogenovibrio crunogenus (strain DSM 25203 / XCL-2) (Thiomicrospira crunogena), this protein is Ubiquinone/menaquinone biosynthesis C-methyltransferase UbiE.